The sequence spans 166 residues: Small ribosomal subunit protein uS5 (166 aa).

Residues 11-74 form the S5 DRBM domain; the sequence is LQEKLIAVNR…EKARRNMINV (64 aa).

It belongs to the universal ribosomal protein uS5 family. As to quaternary structure, part of the 30S ribosomal subunit. Contacts proteins S4 and S8.

In terms of biological role, with S4 and S12 plays an important role in translational accuracy. Functionally, located at the back of the 30S subunit body where it stabilizes the conformation of the head with respect to the body. The protein is Small ribosomal subunit protein uS5 of Haemophilus influenzae (strain 86-028NP).